The chain runs to 315 residues: Tetraacyldisaccharide 4'-kinase (315 aa).

45-52 contributes to the ATP binding site; sequence SVGGSGKT.

The protein belongs to the LpxK family.

It catalyses the reaction a lipid A disaccharide + ATP = a lipid IVA + ADP + H(+). Its pathway is glycolipid biosynthesis; lipid IV(A) biosynthesis; lipid IV(A) from (3R)-3-hydroxytetradecanoyl-[acyl-carrier-protein] and UDP-N-acetyl-alpha-D-glucosamine: step 6/6. In terms of biological role, transfers the gamma-phosphate of ATP to the 4'-position of a tetraacyldisaccharide 1-phosphate intermediate (termed DS-1-P) to form tetraacyldisaccharide 1,4'-bis-phosphate (lipid IVA). In Aquifex aeolicus (strain VF5), this protein is Tetraacyldisaccharide 4'-kinase.